Consider the following 1102-residue polypeptide: Coiled-coil domain-containing protein AGAP005037 (1102 aa).

A compositionally biased stretch (basic and acidic residues) spans 1-11; it reads MLIRWKSKDKS. Disordered stretches follow at residues 1-69 and 295-318; these read MLIR…HTLG and HKSK…RGMY. Low complexity predominate over residues 12–21; sequence SSSTSSSSST. Basic and acidic residues predominate over residues 50–65; the sequence is IDDRRRSARSREDPRR. Residues 405–430 are a coiled coil; it reads HRIRVEHMERQLANLTGLVQKALTQN. 2 disordered regions span residues 450 to 475 and 489 to 539; these read RNAE…STCH and DIQG…PLVM. 2 coiled-coil regions span residues 554 to 579 and 614 to 654; these read EVYN…LRRL and DKER…EVIN. Disordered regions lie at residues 745 to 774, 832 to 958, and 1031 to 1087; these read LPIP…PSPR, TKIS…CSDN, and LCGG…TLPP. Positions 832–849 are enriched in polar residues; sequence TKISQSQLYPSEPVSSNV. Pro residues predominate over residues 867 to 881; it reads PPQPTRPTTGKPPVP. Residues 904 to 918 show a composition bias toward low complexity; it reads TSSRSPLASPTSPHV. Polar residues predominate over residues 936-958; that stretch reads DCEQQQRTSEGTDSGSESVCSDN.

The polypeptide is Coiled-coil domain-containing protein AGAP005037 (Anopheles gambiae (African malaria mosquito)).